The sequence spans 165 residues: Ureidoglycolate lyase (165 aa).

This sequence belongs to the ureidoglycolate lyase family. Homodimer. Requires Ni(2+) as cofactor.

The enzyme catalyses (S)-ureidoglycolate = urea + glyoxylate. It participates in nitrogen metabolism; (S)-allantoin degradation. Its function is as follows. Catalyzes the catabolism of the allantoin degradation intermediate (S)-ureidoglycolate, generating urea and glyoxylate. Involved in the utilization of allantoin as nitrogen source. The chain is Ureidoglycolate lyase from Chelativorans sp. (strain BNC1).